Reading from the N-terminus, the 216-residue chain is Probable nicotinate-nucleotide adenylyltransferase (216 aa).

Belongs to the NadD family.

It carries out the reaction nicotinate beta-D-ribonucleotide + ATP + H(+) = deamido-NAD(+) + diphosphate. The protein operates within cofactor biosynthesis; NAD(+) biosynthesis; deamido-NAD(+) from nicotinate D-ribonucleotide: step 1/1. Catalyzes the reversible adenylation of nicotinate mononucleotide (NaMN) to nicotinic acid adenine dinucleotide (NaAD). The chain is Probable nicotinate-nucleotide adenylyltransferase from Buchnera aphidicola subsp. Schizaphis graminum (strain Sg).